A 304-amino-acid polypeptide reads, in one-letter code: uncharacterized protein (304 aa).

The span at 1 to 10 (MLWAHRKKRK) shows a compositional bias: basic residues. The segment at 1 to 28 (MLWAHRKKRKAATETTEDKPLESHRAND) is disordered. Residues 16 to 27 (TEDKPLESHRAN) show a composition bias toward basic and acidic residues. Residue Ser-39 is modified to Phosphoserine. Over residues 91-101 (KQKISGSSMTK) the composition is skewed to polar residues. Disordered stretches follow at residues 91-115 (KQKI…SMED), 138-160 (SMLQ…ISPE), and 190-304 (SHTV…IYGS). The segment covering 151–160 (HAESRNISPE) has biased composition (basic and acidic residues). Position 158 is a phosphoserine (Ser-158). The segment covering 195-206 (SQSRHSNQSHHS) has biased composition (low complexity). Residues 208 to 223 (PSHQSNQSHPVYSSYQ) are compositionally biased toward polar residues. Low complexity predominate over residues 229-248 (HLSPQSYPSYSSHQSHPGHS). The segment covering 249 to 263 (NHQGHSGLSSHQTHL) has biased composition (polar residues). Residues 264–292 (GHSNHQGHPGHSSHQSHQGQPGHPSHQSH) are compositionally biased toward low complexity.

This is an uncharacterized protein from Mus musculus (Mouse).